The chain runs to 306 residues: MKVLLANPRGFCAGVDRAIEIVERALKLHGAPVYVRHEVVHNKFVVDGLKAKGAIFVEDIADVPNEQVVIFSAHGVSMAVRKQTQDIDATIYDATCPLVTKVHKEVIRKQKQQHQVILIGHKGHPEVEGTLGQSNEELQLVETIEDVGRLNLSKNTPISYTTQTTLSIDDTKHIVDYLKSKFPTIDAPKKDNICYATQNRQDGVKILMQSSDILLVLGSSNSSNSNRLREIAEKMDIPAYLINDADEIDELWLKDVNTIGVTAGASAPEVLVQEVIHYLCDKGVTKVIEVNGAKENIHFPVPKELR.

Cys-12 is a binding site for [4Fe-4S] cluster. Residues His-41 and His-74 each contribute to the (2E)-4-hydroxy-3-methylbut-2-enyl diphosphate site. Residues His-41 and His-74 each contribute to the dimethylallyl diphosphate site. Residues His-41 and His-74 each coordinate isopentenyl diphosphate. A [4Fe-4S] cluster-binding site is contributed by Cys-96. Residue His-124 coordinates (2E)-4-hydroxy-3-methylbut-2-enyl diphosphate. Residue His-124 participates in dimethylallyl diphosphate binding. His-124 lines the isopentenyl diphosphate pocket. Glu-126 serves as the catalytic Proton donor. Thr-164 contacts (2E)-4-hydroxy-3-methylbut-2-enyl diphosphate. Residue Cys-194 participates in [4Fe-4S] cluster binding. 4 residues coordinate (2E)-4-hydroxy-3-methylbut-2-enyl diphosphate: Ser-222, Ser-223, Asn-224, and Ser-266. The dimethylallyl diphosphate site is built by Ser-222, Ser-223, Asn-224, and Ser-266. Residues Ser-222, Ser-223, Asn-224, and Ser-266 each contribute to the isopentenyl diphosphate site.

Belongs to the IspH family. The cofactor is [4Fe-4S] cluster.

The catalysed reaction is isopentenyl diphosphate + 2 oxidized [2Fe-2S]-[ferredoxin] + H2O = (2E)-4-hydroxy-3-methylbut-2-enyl diphosphate + 2 reduced [2Fe-2S]-[ferredoxin] + 2 H(+). The enzyme catalyses dimethylallyl diphosphate + 2 oxidized [2Fe-2S]-[ferredoxin] + H2O = (2E)-4-hydroxy-3-methylbut-2-enyl diphosphate + 2 reduced [2Fe-2S]-[ferredoxin] + 2 H(+). Its pathway is isoprenoid biosynthesis; dimethylallyl diphosphate biosynthesis; dimethylallyl diphosphate from (2E)-4-hydroxy-3-methylbutenyl diphosphate: step 1/1. It participates in isoprenoid biosynthesis; isopentenyl diphosphate biosynthesis via DXP pathway; isopentenyl diphosphate from 1-deoxy-D-xylulose 5-phosphate: step 6/6. Its function is as follows. Catalyzes the conversion of 1-hydroxy-2-methyl-2-(E)-butenyl 4-diphosphate (HMBPP) into a mixture of isopentenyl diphosphate (IPP) and dimethylallyl diphosphate (DMAPP). Acts in the terminal step of the DOXP/MEP pathway for isoprenoid precursor biosynthesis. In Ruthia magnifica subsp. Calyptogena magnifica, this protein is 4-hydroxy-3-methylbut-2-enyl diphosphate reductase.